The chain runs to 789 residues: Protein translocase subunit SecA 2 (789 aa).

Residues Gln79, 97–101 (GEGKT), and Asp487 contribute to the ATP site.

The protein belongs to the SecA family. In terms of assembly, monomer and homodimer. Part of the essential Sec protein translocation apparatus which comprises SecA, SecYEG and auxiliary proteins SecDF. Other proteins may also be involved.

It is found in the cell membrane. It localises to the cytoplasm. It catalyses the reaction ATP + H2O + cellular proteinSide 1 = ADP + phosphate + cellular proteinSide 2.. Its function is as follows. Part of the Sec protein translocase complex. Interacts with the SecYEG preprotein conducting channel. Has a central role in coupling the hydrolysis of ATP to the transfer of proteins into and across the cell membrane, serving as an ATP-driven molecular motor driving the stepwise translocation of polypeptide chains across the membrane. The sequence is that of Protein translocase subunit SecA 2 from Pediococcus pentosaceus (strain ATCC 25745 / CCUG 21536 / LMG 10740 / 183-1w).